The primary structure comprises 153 residues: Small ribosomal subunit protein uS17 (153 aa).

Belongs to the universal ribosomal protein uS17 family.

The chain is Small ribosomal subunit protein uS17 (RpS11) from Anopheles gambiae (African malaria mosquito).